A 413-amino-acid polypeptide reads, in one-letter code: MKRVNSCVKDEEHVLEELETEGERQLKSLLQHQLDTSVSIEECVSKKKSFAPGTMYKPFGKEAAGTMTLSQFQTLHEKDQETASLRELGLNETEILIWKSHVSGEKRTKLRATPEAIQKRLEDIKERISERQRILCLPQRFSKSKQLTRREMEIEKSLFQGTDRHSFLKALYYQDEPPKKNKGDPMNNLEHFYRETIMKKRLEEFQLLRGESFACHSLVSAASVSGSGTAEKPSLLQDKGKQAAQGKGPRLHVAKLIDFPTEQYWTGPKTLKQPIEFIPEDEIQRNRLSEEEIRNIPMFSSYNPGEPNKVLYLKNLSPRVKERDLISLFARFQEKKGPPIQFRMMTGRMRGQAFLTFPNKDIAWQALHQINGYKLYGKILVIEFAKSKKQQSAVQRSSLITSAPDGRTEINGS.

Residues 225–247 (SGSGTAEKPSLLQDKGKQAAQGK) form a disordered region. Positions 309-387 (KVLYLKNLSP…KILVIEFAKS (79 aa)) constitute an RRM domain.

Its function is as follows. May bind RNA. The polypeptide is RNA-binding protein 41 (Rbm41) (Mus musculus (Mouse)).